A 98-amino-acid polypeptide reads, in one-letter code: Flagellar hook-basal body complex protein FliE (98 aa).

Over residues 1 to 23 the composition is skewed to low complexity; the sequence is MNNINDLRLNNNISNTNKSQNST. The disordered stretch occupies residues 1–24; that stretch reads MNNINDLRLNNNISNTNKSQNSTG.

The protein belongs to the FliE family.

The protein localises to the bacterial flagellum basal body. The polypeptide is Flagellar hook-basal body complex protein FliE (Campylobacter jejuni subsp. jejuni serotype O:2 (strain ATCC 700819 / NCTC 11168)).